The following is a 133-amino-acid chain: Triatox (133 aa).

Positions 1–22 (MTTLRVLLAVCCAAYCILAEDV) are cleaved as a signal peptide. The region spanning 23 to 125 (TVPANGELKL…RAMCTVYSAE (103 aa)) is the CUB domain. C70 and C86 are joined by a disulfide.

This sequence belongs to the venom CUB family. Expressed by the venom gland.

Its subcellular location is the secreted. Functionally, may function as an antimicrobial peptide and may be related to the innate defense of the insect in the salivary glands. This Triatoma infestans (Assassin bug) protein is Triatox.